The following is a 383-amino-acid chain: MAIINKDKATELILKQGFSGSYQSEQVTFLLKRTHIEPTDTAEKERLIQSGEKHYSQMISLENAPTARHLELFEQAMQQGQQRLAQEVQQLAQTLVVEFNEPIVLVSFVRAGVPLGVLLYHAIQDLGRDCVHYGISIIRDRGIDFAALETIIARHGHASIVFVDGWTGKGAIRQELQRSLGNDTRFIGKPLPLVVLSDIAGCAWLAASGDDWLIPSGILGSTISGLISRSICEGETLSADEITAENIDQWHRCIEYHHLKEFDISQQFIQRINQIRLKLNPQSNAVWAETQQQAQQDQSQQVVHKLAQEYDIQNINRIKPSIAEATRAILRRVPDLVLLRDADDEDTRLLRHLTQITKTPVQVVGDQIAPYRAITLIQKLGKG.

It belongs to the cysteine protease StiP family. Is probably processed via an autocatalytic removal of a proregion of about 100 amino acids.

Is inhibited by bromopyruvate in vitro. Activity is not affected by the presence of tellurite. Functionally, cysteine protease that may play a role in regulating cell morphology in response to stressful conditions which likely cause oxidative damage. Appears to catalyze its own cleavage, which probably leads to its activation. This chain is Cysteine protease StiP (stiP), found in Acinetobacter baylyi (strain ATCC 33305 / BD413 / ADP1).